The sequence spans 707 residues: Choline transporter-like protein 4 (707 aa).

At 1–27 the chain is on the cytoplasmic side; that stretch reads MASEEYGEPAKHDPSFKGPIKKRGCTD. The chain crosses the membrane as a helical span at residues 28–48; it reads IICCVLFMVFLLGYMVVGILA. Topologically, residues 49–225 are extracellular; it reads WLYGDPRQVI…KIFEDFAKSW (177 aa). 5 N-linked (GlcNAc...) asparagine glycosylation sites follow: Asn-62, Asn-140, Asn-176, Asn-191, and Asn-196. Residues 226–246 form a helical membrane-spanning segment; it reads PWIITALVIAMVVSLLFLILL. The Cytoplasmic portion of the chain corresponds to 247–249; that stretch reads RFT. Residues 250–270 traverse the membrane as a helical segment; that stretch reads AGILVWVLIVGVIGVIGYGIY. The Extracellular segment spans residues 271–305; it reads HCYMEYDTLNKQGVSVSDVGFTFNLGVYFRVKETW. The chain crosses the membrane as a helical span at residues 306 to 326; sequence LAILIVLAVVEAILLLVLLFL. The Cytoplasmic portion of the chain corresponds to 327-354; it reads RKRILIAIALIKEASKAIGHIMSSLFYP. A helical membrane pass occupies residues 355–375; that stretch reads LVTFVLLVVCVAYWGMTALYL. Over 376–442 the chain is Extracellular; that stretch reads ATSGAPIYRI…TNLFNLQIYN (67 aa). Asn-389, Asn-397, and Asn-401 each carry an N-linked (GlcNAc...) asparagine glycan. Residues 443–463 traverse the membrane as a helical segment; it reads VIGFLWCINFVIALGQCVLAG. Residues 464–494 are Cytoplasmic-facing; sequence AFASYYWAFHKPKDIPFFPVAESFMRTLRYH. Residues 495-515 traverse the membrane as a helical segment; sequence TGSLAFGSLILTIVQLIRIIL. The Extracellular portion of the chain corresponds to 516–556; sequence EYVDHKLKGAQNPCTRFLLCCLKCCFWCLEKFIKFLNRNAY. A helical transmembrane segment spans residues 557 to 577; the sequence is IMIAVYGKNFCVSAKNAFKLL. Residues 578–593 lie on the Cytoplasmic side of the membrane; the sequence is MRNIVRVVVLDKVTDL. Residues 594 to 614 form a helical membrane-spanning segment; sequence LIFFGKLIVVGGVGVLAFFFF. At 615–633 the chain is on the extracellular side; the sequence is SGRIPIPNDSFKSPTLNYY. The N-linked (GlcNAc...) asparagine glycan is linked to Asn-622. Residues 634–654 traverse the membrane as a helical segment; that stretch reads WIPIITVVLGSYMIAHGFFSV. Topologically, residues 655–707 are cytoplasmic; the sequence is YNMCVDTLFLCFLEDLERNDGSQEKPYYMSKSLMSILNKKNRPPKSEEKKKKK.

Belongs to the CTL (choline transporter-like) family.

It is found in the membrane. The protein localises to the apical cell membrane. The catalysed reaction is choline(out) + n H(+)(in) = choline(in) + n H(+)(out). The enzyme catalyses thiamine diphosphate(out) = thiamine diphosphate(in). Functionally, choline transporter that seems to play a role in the choline-acetylcholine system and is required to the efferent innervation of hair cells in the olivocochlear bundle for the maintenance of physiological function of outer hair cells and the protection of hair cells from acoustic injury. Also described as a thiamine pyrophosphate transporter. In terms of biological role, also described as a thiamine pyrophosphate transporter. The polypeptide is Choline transporter-like protein 4 (slc44a4) (Xenopus laevis (African clawed frog)).